Consider the following 368-residue polypeptide: tRNA-specific 2-thiouridylase MnmA (368 aa).

ATP-binding positions include 6 to 13 (ALSGGVDS) and Met-32. Cys-92 functions as the Nucleophile in the catalytic mechanism. The cysteines at positions 92 and 186 are disulfide-linked. Gly-116 contacts ATP. Positions 134–136 (KDQ) are interaction with tRNA. The Cysteine persulfide intermediate role is filled by Cys-186. An interaction with tRNA region spans residues 292–293 (RY).

It belongs to the MnmA/TRMU family.

Its subcellular location is the cytoplasm. The catalysed reaction is S-sulfanyl-L-cysteinyl-[protein] + uridine(34) in tRNA + AH2 + ATP = 2-thiouridine(34) in tRNA + L-cysteinyl-[protein] + A + AMP + diphosphate + H(+). Catalyzes the 2-thiolation of uridine at the wobble position (U34) of tRNA, leading to the formation of s(2)U34. The polypeptide is tRNA-specific 2-thiouridylase MnmA (Campylobacter hominis (strain ATCC BAA-381 / DSM 21671 / CCUG 45161 / LMG 19568 / NCTC 13146 / CH001A)).